The primary structure comprises 337 residues: Holliday junction branch migration complex subunit RuvB (337 aa).

Residues 1 to 179 are large ATPase domain (RuvB-L); it reads MTHQVAVLHQ…FAFSARLSYY (179 aa). Residues L18, R19, G60, K63, T64, S65, 126-128, R169, Y179, and R216 contribute to the ATP site; that span reads EDF. Residue T64 participates in Mg(2+) binding. Residues 180–250 form a small ATPAse domain (RuvB-S) region; the sequence is SDQDLKEILV…VAEKALAMLL (71 aa). The head domain (RuvB-H) stretch occupies residues 253-337; the sequence is DWGLNEIDIK…KNLLSLGEGQ (85 aa). Positions 308 and 313 each coordinate DNA.

It belongs to the RuvB family. In terms of assembly, homohexamer. Forms an RuvA(8)-RuvB(12)-Holliday junction (HJ) complex. HJ DNA is sandwiched between 2 RuvA tetramers; dsDNA enters through RuvA and exits via RuvB. An RuvB hexamer assembles on each DNA strand where it exits the tetramer. Each RuvB hexamer is contacted by two RuvA subunits (via domain III) on 2 adjacent RuvB subunits; this complex drives branch migration. In the full resolvosome a probable DNA-RuvA(4)-RuvB(12)-RuvC(2) complex forms which resolves the HJ.

The protein localises to the cytoplasm. The enzyme catalyses ATP + H2O = ADP + phosphate + H(+). Its function is as follows. The RuvA-RuvB-RuvC complex processes Holliday junction (HJ) DNA during genetic recombination and DNA repair, while the RuvA-RuvB complex plays an important role in the rescue of blocked DNA replication forks via replication fork reversal (RFR). RuvA specifically binds to HJ cruciform DNA, conferring on it an open structure. The RuvB hexamer acts as an ATP-dependent pump, pulling dsDNA into and through the RuvAB complex. RuvB forms 2 homohexamers on either side of HJ DNA bound by 1 or 2 RuvA tetramers; 4 subunits per hexamer contact DNA at a time. Coordinated motions by a converter formed by DNA-disengaged RuvB subunits stimulates ATP hydrolysis and nucleotide exchange. Immobilization of the converter enables RuvB to convert the ATP-contained energy into a lever motion, pulling 2 nucleotides of DNA out of the RuvA tetramer per ATP hydrolyzed, thus driving DNA branch migration. The RuvB motors rotate together with the DNA substrate, which together with the progressing nucleotide cycle form the mechanistic basis for DNA recombination by continuous HJ branch migration. Branch migration allows RuvC to scan DNA until it finds its consensus sequence, where it cleaves and resolves cruciform DNA. This is Holliday junction branch migration complex subunit RuvB from Chlamydia pneumoniae (Chlamydophila pneumoniae).